A 120-amino-acid chain; its full sequence is MNQLIIRAIEERFKKSNIPDFKPGDTVKVHVKVKEGDKERIQVFEGVVIARRGGGLRETFTVRKISFGVGVERVFPLHSPIIDKIELVRRGDVRRAKLYYLRTKKGKEAKVKEKTDYQKA.

This sequence belongs to the bacterial ribosomal protein bL19 family.

Its function is as follows. This protein is located at the 30S-50S ribosomal subunit interface and may play a role in the structure and function of the aminoacyl-tRNA binding site. This chain is Large ribosomal subunit protein bL19, found in Thermodesulfovibrio yellowstonii (strain ATCC 51303 / DSM 11347 / YP87).